A 294-amino-acid polypeptide reads, in one-letter code: Proline iminopeptidase (294 aa).

Residues 27 to 277 form the AB hydrolase-1 domain; the sequence is PPLVLLHGGP…GCGHMSFVEK (251 aa). The Nucleophile role is filled by Ser-105. Residue Asp-244 is part of the active site. Catalysis depends on His-271, which acts as the Proton donor.

Belongs to the peptidase S33 family.

The protein localises to the cell envelope. The enzyme catalyses Release of N-terminal proline from a peptide.. Functionally, releases the N-terminal proline from various substrates. This is Proline iminopeptidase from Lactobacillus helveticus (strain DPC 4571).